A 187-amino-acid chain; its full sequence is Protein SCM4 (187 aa).

The next 3 membrane-spanning stretches (helical) occupy residues 11–31 (IAVS…VISI), 45–65 (VLCT…GAFG), and 80–100 (LLCG…VSLF). The span at 114-134 (DLEKQKDEKLPQHHPEVKDGE) shows a compositional bias: basic and acidic residues. Positions 114–135 (DLEKQKDEKLPQHHPEVKDGEA) are disordered. The helical transmembrane segment at 162–182 (MSLHMSIVTGITIFTFGKCIL) threads the bilayer.

The protein belongs to the ATG33 family.

Its subcellular location is the membrane. The sequence is that of Protein SCM4 (SCM4) from Saccharomyces cerevisiae (strain ATCC 204508 / S288c) (Baker's yeast).